A 121-amino-acid chain; its full sequence is Ribonuclease P protein component (121 aa).

The protein belongs to the RnpA family. Consists of a catalytic RNA component (M1 or rnpB) and a protein subunit.

It carries out the reaction Endonucleolytic cleavage of RNA, removing 5'-extranucleotides from tRNA precursor.. Its function is as follows. RNaseP catalyzes the removal of the 5'-leader sequence from pre-tRNA to produce the mature 5'-terminus. It can also cleave other RNA substrates such as 4.5S RNA. The protein component plays an auxiliary but essential role in vivo by binding to the 5'-leader sequence and broadening the substrate specificity of the ribozyme. The protein is Ribonuclease P protein component of Desulfosudis oleivorans (strain DSM 6200 / JCM 39069 / Hxd3) (Desulfococcus oleovorans).